The sequence spans 342 residues: Dof zinc finger protein DOF4.6 (342 aa).

Residues 21 to 54 form a disordered region; sequence NTCPKPQPQPLQPQQPPSVGGERKARPEKDQAVN. The span at 25 to 36 shows a compositional bias: pro residues; it reads KPQPQPLQPQQP. The span at 41–51 shows a compositional bias: basic and acidic residues; the sequence is GERKARPEKDQ. The segment at 53 to 107 adopts a Dof-type zinc-finger fold; that stretch reads VNCPRCNSTNTKFCYYNNYSLTQPRYFCKGCRRYWTEGGSLRNIPVGGGSRKNKR. Zn(2+)-binding residues include cysteine 55, cysteine 58, cysteine 80, and cysteine 83. The interval 94–136 is disordered; it reads RNIPVGGGSRKNKRSHSSSSDISNNHSDSTQPATKKHLSDHHH. The span at 110-122 shows a compositional bias: low complexity; sequence SSSSDISNNHSDS. The segment covering 127-136 has biased composition (basic residues); the sequence is TKKHLSDHHH.

In terms of tissue distribution, accumulates in the stele.

The protein resides in the nucleus. Its function is as follows. Transcription factor that binds specifically to a 5'-AA[AG]G-3' consensus core sequence. This chain is Dof zinc finger protein DOF4.6, found in Arabidopsis thaliana (Mouse-ear cress).